Consider the following 573-residue polypeptide: 3-(3-hydroxy-phenyl)propionate/3-hydroxycinnamic acid hydroxylase (573 aa).

FAD is bound by residues 18-47 (DVVIVGAGPVGLTLANILGLQGVRTMIVEE) and 283-293 (FRKGRMFLAGD).

Belongs to the PheA/TfdB FAD monooxygenase family. FAD serves as cofactor.

The enzyme catalyses 3-(3-hydroxyphenyl)propanoate + NADH + O2 + H(+) = 3-(2,3-dihydroxyphenyl)propanoate + NAD(+) + H2O. It carries out the reaction (2E)-3-(3-hydroxyphenyl)prop-2-enoate + NADH + O2 + H(+) = (2E)-3-(2,3-dihydroxyphenyl)prop-2-enoate + NAD(+) + H2O. The protein operates within aromatic compound metabolism; 3-phenylpropanoate degradation. Catalyzes the insertion of one atom of molecular oxygen into position 2 of the phenyl ring of 3-(3-hydroxyphenyl)propionate (3-HPP) and hydroxycinnamic acid (3HCI). This is 3-(3-hydroxy-phenyl)propionate/3-hydroxycinnamic acid hydroxylase from Mycobacterium sp. (strain KMS).